The sequence spans 357 residues: 3-dehydroquinate synthase (357 aa).

NAD(+) contacts are provided by residues 99 to 103, 123 to 124, Lys-135, Lys-144, and 162 to 165; these read GATGD, TT, and FLET. Zn(2+)-binding residues include Glu-177, His-247, and His-261.

Belongs to the sugar phosphate cyclases superfamily. Dehydroquinate synthase family. The cofactor is Co(2+). Zn(2+) serves as cofactor. NAD(+) is required as a cofactor.

The protein resides in the cytoplasm. It carries out the reaction 7-phospho-2-dehydro-3-deoxy-D-arabino-heptonate = 3-dehydroquinate + phosphate. It participates in metabolic intermediate biosynthesis; chorismate biosynthesis; chorismate from D-erythrose 4-phosphate and phosphoenolpyruvate: step 2/7. Functionally, catalyzes the conversion of 3-deoxy-D-arabino-heptulosonate 7-phosphate (DAHP) to dehydroquinate (DHQ). In Macrococcus caseolyticus (strain JCSC5402) (Macrococcoides caseolyticum), this protein is 3-dehydroquinate synthase.